A 372-amino-acid polypeptide reads, in one-letter code: MLVWLFSWLGHYYAPFYAVSSLTLRALLAVVTALAFSMVFGNRVIRRLRALKYGQAIRNDGPQSHLVKTGTPTMGGVLILSAIGVSTLLWARLNNPYVWILLIVMIIFGAVGWADDWLKIKYKNPKGLIARKKYFWLSMGALFVGISLYYIATLQPDIATTREMQDLLIPIFKDWMIPFSAVPFGIGFIIFTYFVINGASNAVNLTDGLDGLAILPVVLVAAGLGAMAYVSGDVRFADYLHVPYIAYNSEVIIVCGAMIGAGLGFLWFNAHPAQVFMGDVGALSLGAMLGTIAVMTRQEIAFAIMGGLFVAEALSVMLQVGSYKLRKKRVFRMAPLHHHFEEIGWKETQVVARFWIIAIILVILGLMTLKLR.

10 consecutive transmembrane segments (helical) span residues 2 to 22 (LVWL…VSSL), 71 to 91 (TPTM…LLWA), 98 to 118 (VWIL…DDWL), 134 to 154 (YFWL…IATL), 176 to 196 (MIPF…YFVI), 211 to 231 (GLAI…AYVS), 251 to 271 (VIIV…FNAH), 275 to 295 (VFMG…IAVM), 300 to 320 (IAFA…MLQV), and 349 to 369 (QVVA…LMTL).

This sequence belongs to the glycosyltransferase 4 family. MraY subfamily. Requires Mg(2+) as cofactor.

The protein localises to the cell inner membrane. The enzyme catalyses UDP-N-acetyl-alpha-D-muramoyl-L-alanyl-gamma-D-glutamyl-meso-2,6-diaminopimeloyl-D-alanyl-D-alanine + di-trans,octa-cis-undecaprenyl phosphate = di-trans,octa-cis-undecaprenyl diphospho-N-acetyl-alpha-D-muramoyl-L-alanyl-D-glutamyl-meso-2,6-diaminopimeloyl-D-alanyl-D-alanine + UMP. The protein operates within cell wall biogenesis; peptidoglycan biosynthesis. Functionally, catalyzes the initial step of the lipid cycle reactions in the biosynthesis of the cell wall peptidoglycan: transfers peptidoglycan precursor phospho-MurNAc-pentapeptide from UDP-MurNAc-pentapeptide onto the lipid carrier undecaprenyl phosphate, yielding undecaprenyl-pyrophosphoryl-MurNAc-pentapeptide, known as lipid I. The polypeptide is Phospho-N-acetylmuramoyl-pentapeptide-transferase (Psychrobacter cryohalolentis (strain ATCC BAA-1226 / DSM 17306 / VKM B-2378 / K5)).